A 115-amino-acid polypeptide reads, in one-letter code: NADH-ubiquinone oxidoreductase chain 3 (115 aa).

The next 3 membrane-spanning stretches (helical) occupy residues 3 to 23 (LMAT…IAFW), 55 to 75 (FFLV…LLPL), and 86 to 106 (LTLL…AYEW).

The protein belongs to the complex I subunit 3 family. Core subunit of respiratory chain NADH dehydrogenase (Complex I) which is composed of 45 different subunits. Interacts with TMEM186. Interacts with TMEM242.

It localises to the mitochondrion inner membrane. The enzyme catalyses a ubiquinone + NADH + 5 H(+)(in) = a ubiquinol + NAD(+) + 4 H(+)(out). Functionally, core subunit of the mitochondrial membrane respiratory chain NADH dehydrogenase (Complex I) which catalyzes electron transfer from NADH through the respiratory chain, using ubiquinone as an electron acceptor. Essential for the catalytic activity of complex I. This is NADH-ubiquinone oxidoreductase chain 3 from Mammuthus primigenius (Siberian woolly mammoth).